A 210-amino-acid polypeptide reads, in one-letter code: MCLMVTLVEHPLVQHKLSLMRDERTGVKEFRELAGELSLLLAYEAMRDLEVEPVRFATPIEEGDFPMLSGKKLALVAILRAGLVMTDAIVTLVPAAKVGHIGMYRDPQSLAPVAYYSKLPADIAERRVFLTDPMLATGGSANAAIQNLKDAGAQSIKLMTILAAPEGIHAVQQAHPDVDIVTASVDSRLNDHGYIVPGLGDAGDRIYGTK.

5-phospho-alpha-D-ribose 1-diphosphate contacts are provided by residues Arg80, Arg105, and 132–140 (DPMLATGGS). Residues Ile195 and 200-202 (GDA) each bind uracil. Asp201 is a 5-phospho-alpha-D-ribose 1-diphosphate binding site.

This sequence belongs to the UPRTase family. It depends on Mg(2+) as a cofactor.

The enzyme catalyses UMP + diphosphate = 5-phospho-alpha-D-ribose 1-diphosphate + uracil. It participates in pyrimidine metabolism; UMP biosynthesis via salvage pathway; UMP from uracil: step 1/1. Its activity is regulated as follows. Allosterically activated by GTP. Functionally, catalyzes the conversion of uracil and 5-phospho-alpha-D-ribose 1-diphosphate (PRPP) to UMP and diphosphate. This chain is Uracil phosphoribosyltransferase, found in Deinococcus radiodurans (strain ATCC 13939 / DSM 20539 / JCM 16871 / CCUG 27074 / LMG 4051 / NBRC 15346 / NCIMB 9279 / VKM B-1422 / R1).